Consider the following 497-residue polypeptide: Probable cytosol aminopeptidase (497 aa).

Lys263 and Asp268 together coordinate Mn(2+). Lys275 is an active-site residue. 3 residues coordinate Mn(2+): Asp286, Asp345, and Glu347. Residue Arg349 is part of the active site.

This sequence belongs to the peptidase M17 family. Mn(2+) is required as a cofactor.

Its subcellular location is the cytoplasm. It carries out the reaction Release of an N-terminal amino acid, Xaa-|-Yaa-, in which Xaa is preferably Leu, but may be other amino acids including Pro although not Arg or Lys, and Yaa may be Pro. Amino acid amides and methyl esters are also readily hydrolyzed, but rates on arylamides are exceedingly low.. It catalyses the reaction Release of an N-terminal amino acid, preferentially leucine, but not glutamic or aspartic acids.. Its function is as follows. Presumably involved in the processing and regular turnover of intracellular proteins. Catalyzes the removal of unsubstituted N-terminal amino acids from various peptides. The protein is Probable cytosol aminopeptidase of Methylorubrum extorquens (strain CM4 / NCIMB 13688) (Methylobacterium extorquens).